Here is a 580-residue protein sequence, read N- to C-terminus: NADH-quinone oxidoreductase subunit C/D (580 aa).

An NADH dehydrogenase I subunit C region spans residues 1–171 (MSFDQVIADA…PPFVLTDRLF (171 aa)). Positions 195–580 (ELMVLNFGPH…IDFVMSDVDR (386 aa)) are NADH dehydrogenase I subunit D.

The protein in the N-terminal section; belongs to the complex I 30 kDa subunit family. This sequence in the C-terminal section; belongs to the complex I 49 kDa subunit family. In terms of assembly, NDH-1 is composed of 13 different subunits. Subunits NuoB, CD, E, F, and G constitute the peripheral sector of the complex.

Its subcellular location is the cell inner membrane. The catalysed reaction is a quinone + NADH + 5 H(+)(in) = a quinol + NAD(+) + 4 H(+)(out). Its function is as follows. NDH-1 shuttles electrons from NADH, via FMN and iron-sulfur (Fe-S) centers, to quinones in the respiratory chain. The immediate electron acceptor for the enzyme in this species is believed to be ubiquinone. Couples the redox reaction to proton translocation (for every two electrons transferred, four hydrogen ions are translocated across the cytoplasmic membrane), and thus conserves the redox energy in a proton gradient. The polypeptide is NADH-quinone oxidoreductase subunit C/D (Cereibacter sphaeroides (strain ATCC 17025 / ATH 2.4.3) (Rhodobacter sphaeroides)).